Reading from the N-terminus, the 761-residue chain is Neurotrypsin (761 aa).

Positions 1 to 21 (MALARCVLAVILGALSVVARA) are cleaved as a signal peptide. The tract at residues 25 to 87 (SRSPLHRPHP…PPTIPRRCGA (63 aa)) is disordered. Residues 38 to 48 (RSQHAHYLPSS) are compositionally biased toward low complexity. Residues 85 to 157 (CGAGESWGNA…GKVDWGYCDC (73 aa)) form the Kringle domain. Disulfide bonds link cysteine 85–cysteine 157, cysteine 101–cysteine 141, cysteine 130–cysteine 155, cysteine 191–cysteine 255, cysteine 204–cysteine 265, cysteine 235–cysteine 245, cysteine 298–cysteine 361, cysteine 311–cysteine 371, cysteine 341–cysteine 351, cysteine 411–cysteine 475, cysteine 424–cysteine 485, cysteine 455–cysteine 465, cysteine 505–cysteine 636, cysteine 547–cysteine 563, cysteine 651–cysteine 717, cysteine 680–cysteine 694, and cysteine 707–cysteine 736. Asparagine 93 carries N-linked (GlcNAc...) asparagine glycosylation. SRCR domains lie at 166 to 267 (IRLV…SCVP), 273 to 373 (IRLA…TCYP), and 386 to 487 (IRLV…ICDY). Positions 505–516 (CGLRLLHRRQKR) are zymogen activation region. The region spanning 517–760 (IIGGNNSLRG…FVPWIKSVTS (244 aa)) is the Peptidase S1 domain. N-linked (GlcNAc...) asparagine glycosylation occurs at asparagine 521. The Charge relay system role is filled by histidine 562. Asparagine 569 is a glycosylation site (N-linked (GlcNAc...) asparagine). Aspartate 612 serves as the catalytic Charge relay system. Catalysis depends on serine 711, which acts as the Charge relay system.

This sequence belongs to the peptidase S1 family. In terms of tissue distribution, most abundant in cerebral cortex, hippocampus and amygdala.

The protein resides in the secreted. Functionally, plays a role in neuronal plasticity and the proteolytic action may subserve structural reorganizations associated with learning and memory operations. In Mus musculus (Mouse), this protein is Neurotrypsin (Prss12).